We begin with the raw amino-acid sequence, 348 residues long: Protein RecA (348 aa).

65 to 72 (GPESSGKT) contributes to the ATP binding site.

This sequence belongs to the RecA family.

The protein localises to the cytoplasm. In terms of biological role, can catalyze the hydrolysis of ATP in the presence of single-stranded DNA, the ATP-dependent uptake of single-stranded DNA by duplex DNA, and the ATP-dependent hybridization of homologous single-stranded DNAs. It interacts with LexA causing its activation and leading to its autocatalytic cleavage. This chain is Protein RecA, found in Vibrio anguillarum (strain ATCC 68554 / 775) (Listonella anguillarum).